Here is a 67-residue protein sequence, read N- to C-terminus: Small ribosomal subunit protein eS31 (67 aa).

Zn(2+) contacts are provided by Cys31, Cys34, Cys49, and Cys52. The C4-type zinc-finger motif lies at 31–52; sequence CPKCGAGVFMAEHLNRFACGKC.

The protein belongs to the eukaryotic ribosomal protein eS31 family. Part of the 30S ribosomal subunit. The cofactor is Zn(2+).

The chain is Small ribosomal subunit protein eS31 from Methanococcus maripaludis (strain C5 / ATCC BAA-1333).